Consider the following 221-residue polypeptide: Leucine rich adaptor protein 1-like (221 aa).

Met1 carries the post-translational modification N-acetylmethionine. Positions 1-81 (MEDGPLPDLR…SGSPRRSHPS (81 aa)) are disordered. 2 stretches are compositionally biased toward basic and acidic residues: residues 8-21 (DLRDIELKLGRKVP) and 28-39 (LRGEEPAPREGA). A compositionally biased stretch (low complexity) spans 48–75 (SCSSSSSCSSFAPSVSSSSSSSPASGSP).

This Rattus norvegicus (Rat) protein is Leucine rich adaptor protein 1-like (Lurap1l).